A 32-amino-acid chain; its full sequence is Photosystem II reaction center protein Z (32 aa).

The helical transmembrane segment at phenylalanine 9 to valine 31 threads the bilayer.

This sequence belongs to the PsbZ family. PSII is composed of 1 copy each of membrane proteins PsbA, PsbB, PsbC, PsbD, PsbE, PsbF, PsbH, PsbI, PsbJ, PsbK, PsbL, PsbM, PsbT, PsbY, PsbZ, Psb30/Ycf12, at least 3 peripheral proteins of the oxygen-evolving complex and a large number of cofactors. It forms dimeric complexes.

The protein resides in the plastid. It localises to the chloroplast thylakoid membrane. In terms of biological role, may control the interaction of photosystem II (PSII) cores with the light-harvesting antenna, regulates electron flow through the 2 photosystem reaction centers. PSII is a light-driven water plastoquinone oxidoreductase, using light energy to abstract electrons from H(2)O, generating a proton gradient subsequently used for ATP formation. The polypeptide is Photosystem II reaction center protein Z (Euglena viridis (Cercaria viridis)).